A 164-amino-acid polypeptide reads, in one-letter code: CASP-like protein 1C1 (164 aa).

Residues 1–15 (MGDVEIPPLVKQIVR) are Cytoplasmic-facing. The helical transmembrane segment at 16-36 (GLRGLAFLATILATSFMAASH) threads the bilayer. The Extracellular segment spans residues 37-56 (ERAIFPFDYKADYTDLMLFK). A helical membrane pass occupies residues 57–77 (AFLGANIAASLYSFFFVCLPP). Residues 78 to 83 (KSLLWR) are Cytoplasmic-facing. The helical transmembrane segment at 84–104 (LAIVLDVIMFGLLVAMDSAAI) threads the bilayer. Residues 105 to 132 (AAAYLHKHGDSQAFWPPICSQVPTYCYR) are Extracellular-facing. Residues 133 to 153 (VILAISIGFGGVFMFLLIIII) traverse the membrane as a helical segment. The Cytoplasmic portion of the chain corresponds to 154 to 164 (SISVILNPLLV).

It belongs to the Casparian strip membrane proteins (CASP) family. In terms of assembly, homodimer and heterodimers.

The protein localises to the cell membrane. This chain is CASP-like protein 1C1, found in Populus trichocarpa (Western balsam poplar).